A 325-amino-acid chain; its full sequence is DNA-directed RNA polymerase subunit alpha (325 aa).

Positions 1 to 231 (MQTSLLKPKI…DQLSVFAALE (231 aa)) are alpha N-terminal domain (alpha-NTD). Residues 246 to 325 (IDPILLRPVD…ENWPPAGLDK (80 aa)) form an alpha C-terminal domain (alpha-CTD) region.

It belongs to the RNA polymerase alpha chain family. In terms of assembly, homodimer. The RNAP catalytic core consists of 2 alpha, 1 beta, 1 beta' and 1 omega subunit. When a sigma factor is associated with the core the holoenzyme is formed, which can initiate transcription.

It catalyses the reaction RNA(n) + a ribonucleoside 5'-triphosphate = RNA(n+1) + diphosphate. DNA-dependent RNA polymerase catalyzes the transcription of DNA into RNA using the four ribonucleoside triphosphates as substrates. The sequence is that of DNA-directed RNA polymerase subunit alpha from Paraburkholderia phymatum (strain DSM 17167 / CIP 108236 / LMG 21445 / STM815) (Burkholderia phymatum).